Reading from the N-terminus, the 758-residue chain is Transmembrane E3 ubiquitin-protein ligase 1 (758 aa).

Residues 1 to 26 (MEIDGNTLVFIIVILFLFFSSPGGDG) form the signal peptide. Residues 27–398 (VSSQYEFNQL…YELKIMSIRK (372 aa)) are Lumenal-facing. A helical membrane pass occupies residues 399-419 (HLLFGIALFAAQIYLLLTQMH). Over 420–431 (HTNTPSMVNKIS) the chain is Cytoplasmic. Residues 432-452 (FYCFSMINLVDGSLATLYFVA) traverse the membrane as a helical segment. Residues 453 to 458 (ASVVPE) lie on the Lumenal side of the membrane. The helical transmembrane segment at 459–479 (LYLPLVISAFSCFILASIFEI) threads the bilayer. Residues 480–523 (RYLISIYASQVNEQNVGIINLLRGNTGTYDENRPRPAFIPDEGS) lie on the Cytoplasmic side of the membrane. Residues 524–544 (IGGSLYGRFFFMLIIFTFLIL) traverse the membrane as a helical segment. At 545–553 (SSTSWPRQL) the chain is on the lumenal side. A helical transmembrane segment spans residues 554-574 (RMVFEYILIFILNSYWIPQIF). Over 575-602 (RNAVKGIPSRRERARSSIGGNRSQNKMP) the chain is Cytoplasmic. A helical membrane pass occupies residues 603-623 (LLWSFVIGTTIIRSLPVVYVF). Residues 624–635 (TYSSNVFRHHKD) lie on the Lumenal side of the membrane. Residues 636–656 (VHFVVFLSLWLLFQISILYSQ) traverse the membrane as a helical segment. The Cytoplasmic portion of the chain corresponds to 657-758 (DVLGSRWFLP…PVCRSPLPPL (102 aa)). The segment at 699 to 752 (CAICMSDVPIYIEEIPETHKVDQHSYMVTPCNHVFHTSCLENWMNYKLQCPVCR) adopts an RING-type; atypical zinc-finger fold.

Component of the DSC E3 ligase complexes composed of at least TUL1, DSC2, DSC3, UBX3, CDC48 as well as VLD1 for the vacuole-localized complex or GLD1 for the Golgi/endosome-localized complex. Interacts with UBC4.

The protein localises to the golgi apparatus membrane. The enzyme catalyses S-ubiquitinyl-[E2 ubiquitin-conjugating enzyme]-L-cysteine + [acceptor protein]-L-lysine = [E2 ubiquitin-conjugating enzyme]-L-cysteine + N(6)-ubiquitinyl-[acceptor protein]-L-lysine.. The protein operates within protein modification; protein ubiquitination. In terms of biological role, catalytic component of the DSC E3 ubiquitin ligase complexes that tag proteins present in Golgi, endosome and vacuole membranes and function in protein homeostasis under non-stress conditions and support a role in protein quality control. Mediates ubiquitination of vacuolar proteins such as CPS1, PPN1, PEP12 and other proteins containing exposed hydrophilic residues within their transmembrane domains, leading to their sorting into internal vesicles in late endosomes. Targets also the unpalmitoylated endosomal SNARE TLG1 to the MVB pathway. This chain is Transmembrane E3 ubiquitin-protein ligase 1 (TUL1), found in Saccharomyces cerevisiae (strain ATCC 204508 / S288c) (Baker's yeast).